We begin with the raw amino-acid sequence, 470 residues long: Argininosuccinate lyase (470 aa).

Belongs to the lyase 1 family. Argininosuccinate lyase subfamily.

The protein resides in the cytoplasm. It carries out the reaction 2-(N(omega)-L-arginino)succinate = fumarate + L-arginine. The protein operates within amino-acid biosynthesis; L-arginine biosynthesis; L-arginine from L-ornithine and carbamoyl phosphate: step 3/3. This Mycobacterium sp. (strain MCS) protein is Argininosuccinate lyase.